A 465-amino-acid chain; its full sequence is A-type ATP synthase subunit B (465 aa).

Belongs to the ATPase alpha/beta chains family. In terms of assembly, the A-type ATPase is composed of subunits A(3), B(3), C, D, E(1 or 2), F, H(2), I and proteolipid K(x).

It is found in the cell membrane. In terms of biological role, component of the A-type ATP synthase that produces ATP from ADP in the presence of a proton gradient across the membrane. The B chain is a regulatory subunit. The sequence is that of A-type ATP synthase subunit B from Methanocaldococcus jannaschii (strain ATCC 43067 / DSM 2661 / JAL-1 / JCM 10045 / NBRC 100440) (Methanococcus jannaschii).